Here is a 315-residue protein sequence, read N- to C-terminus: MIEIDNGGAIALKGFNYQKASIILVMIHNFEKDNFIVIPESQEDFEIHLGQDTYFIQVKGTKKLSIGKLKSRPSGKASIIEKNLSPGNVGDIRKIFLWDIAELTKNELISQEGTLIPMKHSLSLKQKTEIINTLDLDEEQKNRMNNQYIYITPFPNDINLALTFLKGEMVNENLLVSNDRAKLVLGELSLEIDRKSEIVVSTESDVERKKIDGNYLKQVFINIKQKEMFDEILDNLSINTIMKKKVKKEKLRIPLLYQNIKEQTKQKADINLLMRENDEGAINYLRDLLVEIVPDMKPTELSIALAIDCFCELGE.

In terms of biological role, component of antiviral defense system Lamassu type I, composed of LmuA and LmuB. Expression of Lamassu type I in B.subtilis (strain BEST7003) confers resistance to phages phi3T, SpBeta and SPR. This chain is Lamassu protein LmuA, found in Bacillus sp. (strain NCIM 5461 / CCTCC AB 2011126 / NIO-1130).